We begin with the raw amino-acid sequence, 425 residues long: Histone-binding protein RBBP4-B (425 aa).

Ala2 bears the N-acetylalanine mark. 7 WD repeats span residues 32–125 (YDLV…NHEG), 126–175 (EVNR…RLRG), 176–223 (HQKE…KTIF), 225–270 (GHTA…HSVD), 271–314 (AHTA…HSFE), 315–371 (SHKD…FIHG), and 372–404 (GHTA…VWQM).

The protein belongs to the WD repeat RBAP46/RBAP48/MSI1 family. Binds directly to histone H4, probably via helix 1 of the histone fold, a region that is not accessible when histone H4 is in chromatin. Probably forms a large corepressor complex that contains ncor1, sin3a, hdac1-A and/or hdac1-B, hdac2, rbbp4-A and/or rbbp4-B and possibly rbbp7.

It localises to the nucleus. Its subcellular location is the chromosome. The protein resides in the telomere. Its function is as follows. Core histone-binding subunit that may target chromatin assembly factors, chromatin remodeling factors and histone deacetylases to their histone substrates in a manner that is regulated by nucleosomal DNA. Component of several complexes which regulate chromatin metabolism. This is Histone-binding protein RBBP4-B (rbbp4-b) from Xenopus laevis (African clawed frog).